The chain runs to 325 residues: Elongation factor P--(R)-beta-lysine ligase (325 aa).

76 to 78 (SPE) is a binding site for substrate. Residues 100 to 102 (RNE) and Asn109 contribute to the ATP site. Tyr118 provides a ligand contact to substrate. 244 to 245 (EL) provides a ligand contact to ATP. Glu251 is a substrate binding site. Gly300 serves as a coordination point for ATP.

Belongs to the class-II aminoacyl-tRNA synthetase family. EpmA subfamily. In terms of assembly, homodimer.

It catalyses the reaction D-beta-lysine + L-lysyl-[protein] + ATP = N(6)-((3R)-3,6-diaminohexanoyl)-L-lysyl-[protein] + AMP + diphosphate + H(+). Functionally, with EpmB is involved in the beta-lysylation step of the post-translational modification of translation elongation factor P (EF-P) on 'Lys-34'. Catalyzes the ATP-dependent activation of (R)-beta-lysine produced by EpmB, forming a lysyl-adenylate, from which the beta-lysyl moiety is then transferred to the epsilon-amino group of EF-P 'Lys-34'. The chain is Elongation factor P--(R)-beta-lysine ligase from Salmonella typhi.